A 236-amino-acid polypeptide reads, in one-letter code: Probable fimbrial chaperone EcpE (236 aa).

The N-terminal stretch at Met-1 to Ala-27 is a signal peptide.

The protein belongs to the EcpB/EcpE family.

Functionally, part of the ecpRABCDE operon, which encodes the E.coli common pilus (ECP). ECP is found in both commensal and pathogenic strains and plays a dual role in early-stage biofilm development and host cell recognition. This chain is Probable fimbrial chaperone EcpE (ecpE), found in Escherichia coli (strain K12).